The primary structure comprises 179 residues: Large ribosomal subunit protein uL6 (179 aa).

The protein belongs to the universal ribosomal protein uL6 family. As to quaternary structure, part of the 50S ribosomal subunit.

Its function is as follows. This protein binds to the 23S rRNA, and is important in its secondary structure. It is located near the subunit interface in the base of the L7/L12 stalk, and near the tRNA binding site of the peptidyltransferase center. This chain is Large ribosomal subunit protein uL6, found in Clostridium acetobutylicum (strain ATCC 824 / DSM 792 / JCM 1419 / IAM 19013 / LMG 5710 / NBRC 13948 / NRRL B-527 / VKM B-1787 / 2291 / W).